Consider the following 68-residue polypeptide: Cx9C motif-containing protein 4 (68 aa).

A CHCH domain is found at 4 to 46; it reads KDPCQKQACEIQKCLQANSYMESKCQAVIQELRKCCAQYPKGR. 2 short sequence motifs (cx9C motif) span residues 7 to 17 and 28 to 38; these read CQKQACEIQKC and CQAVIQELRKC. Disulfide bonds link C7-C38, C17-C28, and C39-C50.

The protein belongs to the CMC4 family. Expressed in many tissues with a relatively high level in skeletal muscle.

The protein resides in the mitochondrion. In Homo sapiens (Human), this protein is Cx9C motif-containing protein 4 (CMC4).